We begin with the raw amino-acid sequence, 359 residues long: MAIQNGLRNRILFLVIFMKFYNREKELNYLKNYVQLEPNSILFVYGPKSSGKSTVMLRVIEELSKKDDLVFFYYDLREYATPTKEEFLEIFFEKGDKKYLLNRFEINLKIFKFGIEEKFDFDNIKLNDVFSKMKESINAVIKDGKKPILIIDELQKLKSIYFNGEGKGDKSLLNELFNLFVHLTKVRHLCHVICLTSDTLFIEEIYRNSTLENTSEYYLIDWLRKESIRNILKEEGFSEEEVDYCLKYLSLPYEISQLINNKKLGLSVEQTIKQWINIERDKILYLISTQKEFEMGKLIDALKLFENKIKVDIKEIIRDNLMDEVKFLIKNEILFYDVMNGIIKPTSVKKWYAIKEVIE.

Residue 46 to 53 (GPKSSGKS) coordinates ATP.

The protein belongs to the archaeal ATPase family.

This is an uncharacterized protein from Methanocaldococcus jannaschii (strain ATCC 43067 / DSM 2661 / JAL-1 / JCM 10045 / NBRC 100440) (Methanococcus jannaschii).